The chain runs to 1752 residues: Serine protease/ABC transporter B family protein tagA (1752 aa).

Residues 1–24 form the signal peptide; that stretch reads MNKKLFIFGLSLFLFLFIFNLSLS. The N-linked (GlcNAc...) asparagine glycan is linked to N20. Residues 280 to 696 enclose the Peptidase S8 domain; that stretch reads HYSIQSGSAS…FGNIQLSKLI (417 aa). Catalysis depends on charge relay system residues D312 and H352. N-linked (GlcNAc...) asparagine glycans are attached at residues N400 and N557. S625 serves as the catalytic Charge relay system. N-linked (GlcNAc...) asparagine glycans are attached at residues N653, N785, and N823. The helical transmembrane segment at 909-929 threads the bilayer; it reads IVLLGIFGIIIVGAVIFVLVC. The interval 946-1032 is disordered; sequence DKGGDGNSIR…QNNSPQYDED (87 aa). Over residues 962-994 the composition is skewed to low complexity; it reads NNNNNNNNNNNNNNNNNNNNNNNNNNNNNNNNN. N993 carries N-linked (GlcNAc...) asparagine glycosylation. A compositionally biased stretch (polar residues) spans 995 to 1004; sequence SNGKQSNIEL. Positions 1013–1028 are enriched in low complexity; it reads GTPNGDDQQQQNNSPQ. Transmembrane regions (helical) follow at residues 1058–1078, 1102–1122, 1174–1194, 1200–1220, 1285–1305, and 1315–1335; these read ILGL…AVPL, FALI…LLAL, IPHM…LFII, LVVL…GGYI, TSGI…SSLV, and LIAF…VASL. One can recognise an ABC transmembrane type-1 domain in the interval 1059–1341; sequence LGLALFLSFI…VASLYTTYKS (283 aa). The ABC transporter domain maps to 1374–1610; the sequence is IQFNKVSFAY…KGMFYDFVQI (237 aa). 1409 to 1416 contacts ATP; the sequence is GPSGGGKS. Residues 1621–1686 are disordered; that stretch reads IQLPSNSRNT…SRSPPPMWRQ (66 aa). Residues 1631–1642 are compositionally biased toward basic and acidic residues; sequence RNADKLRNRSET. Residues N1638, N1670, and N1694 are each glycosylated (N-linked (GlcNAc...) asparagine).

It in the C-terminal section; belongs to the ABC transporter superfamily. ABCB family. Multidrug resistance exporter (TC 3.A.1.201) subfamily. The protein in the N-terminal section; belongs to the peptidase S8 family.

It is found in the membrane. In terms of biological role, required for a general cell fate determination at the onset of development. Required for the specification of an initial population of prespore cells in which tagA is expressed. Required for normal SDF-2 signaling during spore encapsulation. The chain is Serine protease/ABC transporter B family protein tagA (tagA) from Dictyostelium discoideum (Social amoeba).